The primary structure comprises 449 residues: Glucose-6-phosphate isomerase (449 aa).

Glutamate 290 functions as the Proton donor in the catalytic mechanism. Catalysis depends on residues histidine 311 and lysine 425.

The protein belongs to the GPI family.

The protein resides in the cytoplasm. The catalysed reaction is alpha-D-glucose 6-phosphate = beta-D-fructose 6-phosphate. The protein operates within carbohydrate biosynthesis; gluconeogenesis. It participates in carbohydrate degradation; glycolysis; D-glyceraldehyde 3-phosphate and glycerone phosphate from D-glucose: step 2/4. Catalyzes the reversible isomerization of glucose-6-phosphate to fructose-6-phosphate. In Clostridioides difficile (strain 630) (Peptoclostridium difficile), this protein is Glucose-6-phosphate isomerase.